Consider the following 103-residue polypeptide: Spherulin-3A (103 aa).

The interval 1 to 13 (MSVCKGVSGNPAK) is N-terminal arm. Beta/gamma crystallin 'Greek key' domains follow at residues 14–55 (GEVF…KVGP) and 57–99 (TKAF…IVAT).

It belongs to the beta/gamma-crystallin family.

It localises to the cytoplasm. In terms of biological role, structural protein. This is Spherulin-3A from Physarum polycephalum (Slime mold).